Consider the following 390-residue polypeptide: 23S rRNA (uracil(747)-C(5))-methyltransferase RlmC (390 aa).

C12, C20, C23, and C100 together coordinate [4Fe-4S] cluster. Residues Q225, F254, E275, and N322 each coordinate S-adenosyl-L-methionine. C349 (nucleophile) is an active-site residue.

This sequence belongs to the class I-like SAM-binding methyltransferase superfamily. RNA M5U methyltransferase family. RlmC subfamily.

The enzyme catalyses uridine(747) in 23S rRNA + S-adenosyl-L-methionine = 5-methyluridine(747) in 23S rRNA + S-adenosyl-L-homocysteine + H(+). Functionally, catalyzes the formation of 5-methyl-uridine at position 747 (m5U747) in 23S rRNA. In Shewanella baltica (strain OS155 / ATCC BAA-1091), this protein is 23S rRNA (uracil(747)-C(5))-methyltransferase RlmC.